We begin with the raw amino-acid sequence, 452 residues long: Phosphoglucosamine mutase (452 aa).

Serine 104 acts as the Phosphoserine intermediate in catalysis. 4 residues coordinate Mg(2+): serine 104, aspartate 245, aspartate 247, and aspartate 249. Phosphoserine is present on serine 104.

The protein belongs to the phosphohexose mutase family. The cofactor is Mg(2+). Activated by phosphorylation.

It catalyses the reaction alpha-D-glucosamine 1-phosphate = D-glucosamine 6-phosphate. Its function is as follows. Catalyzes the conversion of glucosamine-6-phosphate to glucosamine-1-phosphate. The protein is Phosphoglucosamine mutase of Gluconacetobacter diazotrophicus (strain ATCC 49037 / DSM 5601 / CCUG 37298 / CIP 103539 / LMG 7603 / PAl5).